We begin with the raw amino-acid sequence, 782 residues long: Phosphoribosylformylglycinamidine synthase subunit PurL (782 aa).

His-48 is an active-site residue. Residues Tyr-51 and Lys-90 each coordinate ATP. Residue Glu-92 coordinates Mg(2+). Substrate-binding positions include 93–96 (SHNH) and Arg-115. His-94 serves as the catalytic Proton acceptor. Asp-116 lines the Mg(2+) pocket. Gln-239 is a binding site for substrate. Position 267 (Asp-267) interacts with Mg(2+). 311–313 (ESQ) provides a ligand contact to substrate. ATP-binding residues include Asp-525 and Gly-562. Asn-563 is a Mg(2+) binding site. Ser-565 lines the substrate pocket.

The protein belongs to the FGAMS family. In terms of assembly, monomer. Part of the FGAM synthase complex composed of 1 PurL, 1 PurQ and 2 PurS subunits.

Its subcellular location is the cytoplasm. The enzyme catalyses N(2)-formyl-N(1)-(5-phospho-beta-D-ribosyl)glycinamide + L-glutamine + ATP + H2O = 2-formamido-N(1)-(5-O-phospho-beta-D-ribosyl)acetamidine + L-glutamate + ADP + phosphate + H(+). The protein operates within purine metabolism; IMP biosynthesis via de novo pathway; 5-amino-1-(5-phospho-D-ribosyl)imidazole from N(2)-formyl-N(1)-(5-phospho-D-ribosyl)glycinamide: step 1/2. Functionally, part of the phosphoribosylformylglycinamidine synthase complex involved in the purines biosynthetic pathway. Catalyzes the ATP-dependent conversion of formylglycinamide ribonucleotide (FGAR) and glutamine to yield formylglycinamidine ribonucleotide (FGAM) and glutamate. The FGAM synthase complex is composed of three subunits. PurQ produces an ammonia molecule by converting glutamine to glutamate. PurL transfers the ammonia molecule to FGAR to form FGAM in an ATP-dependent manner. PurS interacts with PurQ and PurL and is thought to assist in the transfer of the ammonia molecule from PurQ to PurL. The chain is Phosphoribosylformylglycinamidine synthase subunit PurL from Nostoc sp. (strain PCC 7120 / SAG 25.82 / UTEX 2576).